A 69-amino-acid chain; its full sequence is DNA gyrase inhibitor YacG (69 aa).

Cys-7, Cys-10, Cys-26, and Cys-30 together coordinate Zn(2+).

Belongs to the DNA gyrase inhibitor YacG family. Interacts with GyrB. Zn(2+) serves as cofactor.

Functionally, inhibits all the catalytic activities of DNA gyrase by preventing its interaction with DNA. Acts by binding directly to the C-terminal domain of GyrB, which probably disrupts DNA binding by the gyrase. This Shewanella baltica (strain OS195) protein is DNA gyrase inhibitor YacG.